A 350-amino-acid chain; its full sequence is MAKSVLVTGGAGYIGSHTVLQLLEGGYSAVVVDNYDNSSAASLQRVKKLAGENGNRLSFHQVDLRDRPALEKIFSETKFDAVIHFAGLKAVGESVEKPLLYYNNNIVGTVTLLEVMAQYGCKNLVFSSSATVYGWPKEVPCTEESPISATNPYGRTKLFIEEICRDVHRSDSEWKIILLRYFNPVGAHPSGYIGEDPLGVPNNLMPYVQQVAVGRRPHLTVFGTDYKTKDGTGVRDYIHVMDLADGHIAALRKLDDLKISCEVYNLGTGNGTSVLEMVAAFEKASGKKIPLVMAGRRPGDAEVVYASTEKAERELNWKAKNGIEEMCRDLWNWASNNPYGYNSSSNGSSS.

NAD(+) is bound by residues 12 to 14, 33 to 37, 63 to 64, F85, and K89; these read GYI, DNYDN, and DL. Residue 129-131 coordinates substrate; sequence SAT. The Proton acceptor role is filled by Y153. Positions 157 and 181 each coordinate NAD(+). Substrate-binding positions include 181–183, 202–204, 220–222, R235, and 297–300; these read YFN, NNL, TVF, and RPGD.

It belongs to the NAD(P)-dependent epimerase/dehydratase family. Forms homodimers and heterodimers. NAD(+) is required as a cofactor. As to expression, widely expressed. Most highly expressed in stems and flowers.

Its subcellular location is the cytoplasm. The enzyme catalyses UDP-alpha-D-glucose = UDP-alpha-D-galactose. Its pathway is carbohydrate metabolism; galactose metabolism. Enhanced activity by NaCl. Enhanced activity by NAD(+). Strongly inhibited by UDP. Catalyzes the interconversion between UDP-glucose and UDP-galactose. Cooperates with UGE3 in pollen development and with UGE4 in cell wall carbohydrate biosynthesis and growth. This is UDP-glucose 4-epimerase 2 from Arabidopsis thaliana (Mouse-ear cress).